The sequence spans 637 residues: 1-deoxy-D-xylulose-5-phosphate synthase (637 aa).

Thiamine diphosphate is bound by residues His76 and 117-119 (GHS). A Mg(2+)-binding site is contributed by Asp148. Thiamine diphosphate is bound by residues 149-150 (GA), Asn177, Tyr294, and Glu381. Asn177 lines the Mg(2+) pocket.

This sequence belongs to the transketolase family. DXPS subfamily. In terms of assembly, homodimer. Mg(2+) serves as cofactor. The cofactor is thiamine diphosphate.

The catalysed reaction is D-glyceraldehyde 3-phosphate + pyruvate + H(+) = 1-deoxy-D-xylulose 5-phosphate + CO2. It participates in metabolic intermediate biosynthesis; 1-deoxy-D-xylulose 5-phosphate biosynthesis; 1-deoxy-D-xylulose 5-phosphate from D-glyceraldehyde 3-phosphate and pyruvate: step 1/1. In terms of biological role, catalyzes the acyloin condensation reaction between C atoms 2 and 3 of pyruvate and glyceraldehyde 3-phosphate to yield 1-deoxy-D-xylulose-5-phosphate (DXP). The protein is 1-deoxy-D-xylulose-5-phosphate synthase of Neisseria gonorrhoeae (strain ATCC 700825 / FA 1090).